A 462-amino-acid chain; its full sequence is MNTRTEHDTMGNVEVPSEAYWGAQTQRSRNNFKIGGETLPQPLIYALALVKKAAAATNVSLGRIKPEQADLITQAADDVLNGKLDGQFPLVVWQTGSGTQSNMNMNEVLANRANEIAGTGLAAYQPVHPNDHVNHAQSTNDAFPTAIHVAAAIEINRHLIPAVKALRDTLDKKAQAFAPIVKIGRTHLQDATPLTLGQEFSGYVSQLDHGLGRLNDALKDLYELALGGTAVGTGLNSHPEYAEKAAAKLAELSGLPFVSAPNKFEALGGRDAAVAASGALKTLAASLNKIANDIRWLASGPRCGLGEIKIPENEPGSSIMPGKVNPTQCEAMTMVCCQVFGNDVTIGMAGASGNFELNVYMPVIAYNLLQSIRLLGDACNSFNEHCAVGIEPVPEKIDYFLHHSLMLVTALNRKIGYENAAKVAKTAYKNNKSLRETAVELGLLTGEEFDELVVPADMVHPR.

Substrate-binding positions include 97 to 99 (SGT), 128 to 131 (HPND), 138 to 140 (STN), and T186. Residue H187 is the Proton donor/acceptor of the active site. Residue S317 is part of the active site. Substrate is bound by residues S318 and 323-325 (KVN).

It belongs to the class-II fumarase/aspartase family. Fumarase subfamily. In terms of assembly, homotetramer.

The protein resides in the cytoplasm. It carries out the reaction (S)-malate = fumarate + H2O. It participates in carbohydrate metabolism; tricarboxylic acid cycle; (S)-malate from fumarate: step 1/1. In terms of biological role, involved in the TCA cycle. Catalyzes the stereospecific interconversion of fumarate to L-malate. The sequence is that of Fumarate hydratase class II from Neisseria meningitidis serogroup A / serotype 4A (strain DSM 15465 / Z2491).